Reading from the N-terminus, the 348-residue chain is Uroporphyrinogen decarboxylase (348 aa).

Substrate is bound by residues 28–32, Asp78, Tyr154, Thr209, and His325; that span reads RQAGR.

It belongs to the uroporphyrinogen decarboxylase family. As to quaternary structure, homodimer.

The protein resides in the cytoplasm. It catalyses the reaction uroporphyrinogen III + 4 H(+) = coproporphyrinogen III + 4 CO2. It participates in porphyrin-containing compound metabolism; protoporphyrin-IX biosynthesis; coproporphyrinogen-III from 5-aminolevulinate: step 4/4. In terms of biological role, catalyzes the decarboxylation of four acetate groups of uroporphyrinogen-III to yield coproporphyrinogen-III. The chain is Uroporphyrinogen decarboxylase from Rhodopseudomonas palustris (strain HaA2).